A 573-amino-acid polypeptide reads, in one-letter code: Potassium-transporting ATPase potassium-binding subunit (573 aa).

10 helical membrane passes run 6–26, 66–86, 135–155, 177–197, 257–277, 283–303, 382–402, 428–448, 493–513, and 537–557; these read ILFALFIVTIALITKPLGSYI, FFSLVSFSVMAFIFVLVILLL, ALAVQNFVSAAVGLCVAIALI, VFWILLPISIVIAIVYIFQGV, IQMVSIFAIAAALTYTFGKWV, GWLIFGVMLVLFIISLVVMTI, IFGGVGAGFYGFFMFLMLAVF, MFALLISLCCVLVFTGLAAVI, ITIALSMLIGRFGVIFAVIML, and FIFAILVFFTILLIGGLTIFP.

It belongs to the KdpA family. The system is composed of three essential subunits: KdpA, KdpB and KdpC.

It localises to the cell inner membrane. Functionally, part of the high-affinity ATP-driven potassium transport (or Kdp) system, which catalyzes the hydrolysis of ATP coupled with the electrogenic transport of potassium into the cytoplasm. This subunit binds the periplasmic potassium ions and delivers the ions to the membrane domain of KdpB through an intramembrane tunnel. This Francisella tularensis subsp. tularensis (strain WY96-3418) protein is Potassium-transporting ATPase potassium-binding subunit.